The chain runs to 339 residues: NADH-quinone oxidoreductase subunit H (339 aa).

The next 9 membrane-spanning stretches (helical) occupy residues 10–30 (FPLT…ILCV), 50–70 (PNVV…KLLF), 82–102 (ILFI…WAVI), 115–135 (VGVL…IIAG), 155–175 (ISYE…TGTL), 187–207 (LPWW…ISVL), 235–255 (MGFA…SAMT), 275–295 (IPGF…FLWI), and 311–331 (GWKV…SVLF).

Belongs to the complex I subunit 1 family. In terms of assembly, NDH-1 is composed of 14 different subunits. Subunits NuoA, H, J, K, L, M, N constitute the membrane sector of the complex.

It localises to the cell inner membrane. It carries out the reaction a quinone + NADH + 5 H(+)(in) = a quinol + NAD(+) + 4 H(+)(out). In terms of biological role, NDH-1 shuttles electrons from NADH, via FMN and iron-sulfur (Fe-S) centers, to quinones in the respiratory chain. The immediate electron acceptor for the enzyme in this species is believed to be ubiquinone. Couples the redox reaction to proton translocation (for every two electrons transferred, four hydrogen ions are translocated across the cytoplasmic membrane), and thus conserves the redox energy in a proton gradient. This subunit may bind ubiquinone. This chain is NADH-quinone oxidoreductase subunit H, found in Rickettsia typhi (strain ATCC VR-144 / Wilmington).